Reading from the N-terminus, the 270-residue chain is Photosystem I chlorophyll a/b-binding protein 6, chloroplastic (270 aa).

The transit peptide at Met1–Thr33 directs the protein to the chloroplast. The tract at residues Ser16 to Thr36 is disordered. A compositionally biased stretch (polar residues) spans Arg19 to Thr36. Position 68 (Trp68) interacts with chlorophyll b. Positions 88 and 107 each coordinate chlorophyll a. Residue Arg112 coordinates chlorophyll b. A helical transmembrane segment spans residues Tyr146 to Ala164. Chlorophyll b contacts are provided by Glu165 and Arg168. 6 residues coordinate chlorophyll a: Lys221, Glu222, Asn225, Arg227, Gln239, and His254. The helical transmembrane segment at Leu228–Ser244 threads the bilayer.

Belongs to the light-harvesting chlorophyll a/b-binding (LHC) protein family. In terms of assembly, the LHC complex consists of chlorophyll a-b binding proteins. Homodimer. Binds pigments. Element of the NAD(P)H dehydrogenase-photosystem I supercomplex (NDH-PSI). Requires Binds at least 14 chlorophylls (8 Chl-a and 6 Chl-b) and carotenoids such as lutein and neoxanthin. as cofactor. Photoregulated by reversible phosphorylation of its threonine residues.

The protein localises to the plastid. It localises to the chloroplast thylakoid membrane. The light-harvesting complex (LHC) functions as a light receptor, it captures and delivers excitation energy to photosystems with which it is closely associated. Seems involved in the function of the photosystem I in low light conditions, when other LHCA proteins are less abundant. Required, together with LHCA5, for the formation of a full-size NAD(P)H dehydrogenase-photosystem I supercomplex (NDH-PSI) that triggers cyclic and chlororespiratory electron transport in chloroplast thylakoids, especially under stress conditions (e.g. increased light intensity). This is Photosystem I chlorophyll a/b-binding protein 6, chloroplastic from Arabidopsis thaliana (Mouse-ear cress).